Reading from the N-terminus, the 139-residue chain is Protein LTO1 homolog (139 aa).

Belongs to the LTO1 family.

This Dictyostelium discoideum (Social amoeba) protein is Protein LTO1 homolog.